The primary structure comprises 348 residues: Histidinol-phosphate aminotransferase (348 aa).

Lys210 bears the N6-(pyridoxal phosphate)lysine mark.

It belongs to the class-II pyridoxal-phosphate-dependent aminotransferase family. Histidinol-phosphate aminotransferase subfamily. In terms of assembly, homodimer. Pyridoxal 5'-phosphate is required as a cofactor.

The catalysed reaction is L-histidinol phosphate + 2-oxoglutarate = 3-(imidazol-4-yl)-2-oxopropyl phosphate + L-glutamate. The protein operates within amino-acid biosynthesis; L-histidine biosynthesis; L-histidine from 5-phospho-alpha-D-ribose 1-diphosphate: step 7/9. The polypeptide is Histidinol-phosphate aminotransferase (Cytophaga hutchinsonii (strain ATCC 33406 / DSM 1761 / CIP 103989 / NBRC 15051 / NCIMB 9469 / D465)).